A 500-amino-acid polypeptide reads, in one-letter code: NAD(P)H-quinone oxidoreductase chain 4, chloroplastic (500 aa).

14 consecutive transmembrane segments (helical) span residues 4–24, 37–57, 84–104, 111–129, 134–154, 167–187, 208–228, 242–262, 272–292, 305–325, 330–350, 374–396, 416–436, and 462–482; these read FPWL…IFFF, ICIC…HFQL, GLSI…TLAA, SRLF…IGSF, LLLF…LLSM, FILY…GMGL, ALEI…SPII, HYST…YGLV, AHSI…IYAA, IAYS…SITD, GAIL…FLAG, IFTM…GFVA, ILIT…SLSM, and LFVS…PDFV.

The protein belongs to the complex I subunit 4 family.

The protein resides in the plastid. The protein localises to the chloroplast thylakoid membrane. The enzyme catalyses a plastoquinone + NADH + (n+1) H(+)(in) = a plastoquinol + NAD(+) + n H(+)(out). It carries out the reaction a plastoquinone + NADPH + (n+1) H(+)(in) = a plastoquinol + NADP(+) + n H(+)(out). This chain is NAD(P)H-quinone oxidoreductase chain 4, chloroplastic, found in Liriodendron tulipifera (Tuliptree).